Here is a 214-residue protein sequence, read N- to C-terminus: Phosphopantothenoylcysteine decarboxylase HAL3 (214 aa).

FMN contacts are provided by residues 30 to 32 and 55 to 57; these read GSV and TRA. The active-site Proton donor is the His92. Residues 108–111 and Ala142 each bind FMN; that span reads SANT. N-[(R)-4-phosphopantothenoyl]-L-cysteine-binding residues include Asn144, Arg174, and Ala176. Residue Cys177 is the Proton donor of the active site. Met185 contributes to the N-[(R)-4-phosphopantothenoyl]-L-cysteine binding site.

The protein belongs to the HFCD (homooligomeric flavin containing Cys decarboxylase) superfamily. Homotrimer. It depends on FMN as a cofactor. In terms of tissue distribution, mainly expressed in stems, to a lower extent in flowers, leaves and fruits, and at basal levels in roots.

The protein resides in the cell membrane. Its subcellular location is the cytoplasm. It carries out the reaction N-[(R)-4-phosphopantothenoyl]-L-cysteine + H(+) = (R)-4'-phosphopantetheine + CO2. The protein operates within cofactor biosynthesis; coenzyme A biosynthesis; CoA from (R)-pantothenate: step 3/5. Involved in plant growth, and promotes salt and osmotic tolerance, probably via coenzyme A (CoA) accumulation and endogenous proline accumulation. Catalyzes the decarboxylation of 4'-phosphopantothenoylcysteine to 4'-phosphopantetheine, a key step in coenzyme A biosynthesis. Required for roots development. The protein is Phosphopantothenoylcysteine decarboxylase HAL3 of Malus domestica (Apple).